We begin with the raw amino-acid sequence, 556 residues long: Glutamine--tRNA ligase (556 aa).

A 'HIGH' region motif is present at residues 34-44; the sequence is PEPNGYLHIGH. Residues 35–37 and 41–47 contribute to the ATP site; these read EPN and HIGHAKS. Asp67 and Tyr212 together coordinate L-glutamine. ATP is bound by residues Thr231, 263-264, and 271-273; these read RL and MSK. Positions 270-274 match the 'KMSKS' region motif; that stretch reads VMSKR.

It belongs to the class-I aminoacyl-tRNA synthetase family. Monomer.

The protein resides in the cytoplasm. The enzyme catalyses tRNA(Gln) + L-glutamine + ATP = L-glutaminyl-tRNA(Gln) + AMP + diphosphate. The sequence is that of Glutamine--tRNA ligase from Nitrosomonas europaea (strain ATCC 19718 / CIP 103999 / KCTC 2705 / NBRC 14298).